The sequence spans 227 residues: Ubiquitin domain-containing protein 1 (227 aa).

A disordered region spans residues Met1 to Lys35. Positions Gly24–Lys35 are enriched in basic and acidic residues. One can recognise a Ubiquitin-like domain in the interval Phe149 to Pro224.

In terms of assembly, interacts with UBTD1.

Its function is as follows. May be involved in the regulation of cellular senescence through a positive feedback loop with TP53. Is a TP53 downstream target gene that increases the stability of TP53 protein by promoting the ubiquitination and degradation of MDM2. The protein is Ubiquitin domain-containing protein 1 (Ubtd1) of Rattus norvegicus (Rat).